A 66-amino-acid chain; its full sequence is UPF0337 protein pc0632 (66 aa).

It belongs to the UPF0337 (CsbD) family.

The chain is UPF0337 protein pc0632 from Protochlamydia amoebophila (strain UWE25).